We begin with the raw amino-acid sequence, 552 residues long: Hyaluronan synthase 2 (552 aa).

Residues 1–11 (MYCERFICILR) lie on the Cytoplasmic side of the membrane. A helical membrane pass occupies residues 12 to 32 (ILGTTLFGVSLLLGITAAYIV). The Extracellular portion of the chain corresponds to 33 to 45 (GYQFIQTDNYYFS). Residues 46 to 66 (FGLYGAILASHLIIQSLFAYL) traverse the membrane as a helical segment. The Cytoplasmic portion of the chain corresponds to 67–374 (EHRKMKRSLE…NAMWFHKHHL (308 aa)). A helical membrane pass occupies residues 375–395 (WMTYEAVITGFFPFFLIATVI). Residues 396–402 (QLFYRGK) are Extracellular-facing. A helical membrane pass occupies residues 403-423 (IWNILLFLLTVQLVGLIKSSF). The Cytoplasmic segment spans residues 424–429 (ASFLRG). A helical transmembrane segment spans residues 430-450 (NIVMVFMSLYSVLYMSSLLPA). The Extracellular segment spans residues 451 to 475 (KMFAIATINKAGWGTSGRKTIVVNF). A helical membrane pass occupies residues 476-496 (IGLIPVSIWFTILLGRVIFTI). Over 497–510 (YKESKKPFSESKTT) the chain is Cytoplasmic. The helical transmembrane segment at 511 to 531 (VLVIGTILYACYWVLLLTLYL) threads the bilayer. Residues 532-552 (VLITKCGRRKKEQHYDMVLDV) lie on the Extracellular side of the membrane.

The protein belongs to the NodC/HAS family. Homodimer; dimerization promotes enzymatic activity. Mg(2+) serves as cofactor.

The protein resides in the cell membrane. Its subcellular location is the endoplasmic reticulum membrane. The protein localises to the vesicle. It is found in the golgi apparatus membrane. It localises to the lysosome. It carries out the reaction [hyaluronan](n) + UDP-N-acetyl-alpha-D-glucosamine = N-acetyl-beta-D-glucosaminyl-(1-&gt;4)-[hyaluronan](n) + UDP + H(+). The catalysed reaction is N-acetyl-beta-D-glucosaminyl-(1-&gt;4)-[hyaluronan](n) + UDP-alpha-D-glucuronate = [hyaluronan](n+1) + UDP + H(+). The protein operates within glycan biosynthesis; hyaluronan biosynthesis. Catalyzes the addition of GlcNAc or GlcUA monosaccharides to the nascent hyaluronan polymer. Therefore, it is essential to hyaluronan synthesis a major component of most extracellular matrices that has a structural role in tissues architectures and regulates cell adhesion, migration and differentiation. This is one of three isoenzymes responsible for cellular hyaluronan synthesis and it is particularly responsible for the synthesis of high molecular mass hyaluronan. This chain is Hyaluronan synthase 2 (HAS2), found in Gallus gallus (Chicken).